A 177-amino-acid polypeptide reads, in one-letter code: Ubiquinol-cytochrome c reductase iron-sulfur subunit (177 aa).

Residues 18 to 38 (MVLTASSVAAVGAVCTLWPLV) traverse the membrane as a helical segment. The 88-residue stretch at 88–175 (ARAVKMSELI…YTFISDKKIR (88 aa)) folds into the Rieske domain. [2Fe-2S] cluster is bound by residues Cys-120, His-122, Cys-139, and His-142. A disulfide bridge links Cys-125 with Cys-141.

Belongs to the Rieske iron-sulfur protein family. The main subunits of complex b-c1 are: cytochrome b, cytochrome c1 and the Rieske protein. Requires [2Fe-2S] cluster as cofactor.

The protein resides in the cell membrane. The catalysed reaction is a quinol + 2 Fe(III)-[cytochrome c](out) = a quinone + 2 Fe(II)-[cytochrome c](out) + 2 H(+)(out). Component of the ubiquinol-cytochrome c reductase complex (complex III or cytochrome b-c1 complex), which is a respiratory chain that generates an electrochemical potential coupled to ATP synthesis. The sequence is that of Ubiquinol-cytochrome c reductase iron-sulfur subunit (petA) from Rickettsia felis (strain ATCC VR-1525 / URRWXCal2) (Rickettsia azadi).